The primary structure comprises 203 residues: Putative 3-methyladenine DNA glycosylase (203 aa).

The protein belongs to the DNA glycosylase MPG family.

The sequence is that of Putative 3-methyladenine DNA glycosylase from Clostridium botulinum (strain Langeland / NCTC 10281 / Type F).